The following is a 184-amino-acid chain: Inorganic pyrophosphatase (184 aa).

Substrate is bound by residues Lys-19, Arg-33, and Tyr-45. Mg(2+) contacts are provided by Asp-55, Asp-60, and Asp-92. Tyr-129 is a binding site for substrate.

This sequence belongs to the PPase family. Homohexamer. The cofactor is Mg(2+).

It localises to the cytoplasm. The catalysed reaction is diphosphate + H2O = 2 phosphate + H(+). In terms of biological role, catalyzes the hydrolysis of inorganic pyrophosphate (PPi) forming two phosphate ions. The polypeptide is Inorganic pyrophosphatase (Mycoplasma pneumoniae (strain ATCC 29342 / M129 / Subtype 1) (Mycoplasmoides pneumoniae)).